A 418-amino-acid polypeptide reads, in one-letter code: Perilipin-1 homolog (418 aa).

Residues 211–275 form a required for lipid droplet localization region; the sequence is LTIGQRVKNL…EKKTWVIEKS (65 aa).

Belongs to the perilipin family. As to expression, expressed in intestinal and epidermal cells. Expressed in the muscle and hypodermis.

It localises to the lipid droplet. Its function is as follows. Lipid droplet-associated protein which plays a role in lipid droplet clustering. This Caenorhabditis elegans protein is Perilipin-1 homolog.